The chain runs to 221 residues: Cyclin-U3-1 (221 aa).

This sequence belongs to the cyclin family. Cyclin U/P subfamily. Interacts with CDKA-1 and CDKB1-1. In terms of tissue distribution, expressed in roots, stems and flowers. Expressed in the shoot apex, leaf primordia and young leaves.

This Arabidopsis thaliana (Mouse-ear cress) protein is Cyclin-U3-1 (CYCU3-1).